Reading from the N-terminus, the 276-residue chain is Elongation factor Ts, mitochondrial (276 aa).

Belongs to the EF-Ts family.

The protein resides in the mitochondrion. Associates with the EF-Tu.GDP complex and induces the exchange of GDP to GTP. It remains bound to the aminoacyl-tRNA.EF-Tu.GTP complex up to the GTP hydrolysis stage on the ribosome. The sequence is that of Elongation factor Ts, mitochondrial from Leishmania braziliensis.